The following is a 101-amino-acid chain: DNA-binding protein Fis (101 aa).

The segment at residues 77-96 (QTRAANMLGINRGTLRKKLK) is a DNA-binding region (H-T-H motif).

It belongs to the transcriptional regulatory Fis family. As to quaternary structure, homodimer.

Functionally, activates ribosomal RNA transcription. Plays a direct role in upstream activation of rRNA promoters. The polypeptide is DNA-binding protein Fis (Shewanella loihica (strain ATCC BAA-1088 / PV-4)).